The chain runs to 331 residues: Putative mitochondrial 2-oxoglutarate/malate carrier protein (331 aa).

Solcar repeat units lie at residues 39–128 (VRAA…FMSR), 140–231 (VGFK…AKAQ), and 239–329 (SSKV…LGWL). Transmembrane regions (helical) follow at residues 42-62 (ALPFINGGLSGMVATTVIQPI), 103-121 (GLSAGLLRQAVYTTARIGC), 148-168 (AGLAAGGLAAMIGNPADLALI), 199-219 (GVAALWAGAAPTVVRAMALNF), 245-265 (LSASAIAGFFASFFSLPFDFV), and 309-329 (YVRIAPHAMVTLLVADYLGWL).

It belongs to the mitochondrial carrier (TC 2.A.29) family.

It localises to the mitochondrion inner membrane. In terms of biological role, catalyzes the transport of 2-oxoglutarate across the inner mitochondrial membrane. The sequence is that of Putative mitochondrial 2-oxoglutarate/malate carrier protein (mic-33) from Neurospora crassa (strain ATCC 24698 / 74-OR23-1A / CBS 708.71 / DSM 1257 / FGSC 987).